The primary structure comprises 757 residues: Exo-alpha-(1-&gt;6)-L-arabinopyranosidase (757 aa).

Aspartate 232 is a catalytic residue.

Belongs to the glycosyl hydrolase 3 family. In terms of assembly, homotetramer.

Its activity is regulated as follows. Completely inhibited by Cu(2+) and activated by Co(2+). In terms of biological role, catalyzes the hydrolysis of a non-reducing terminal alpha-L-arabinopyranosidic linkage in ginsenoside Rb2 (alpha-L-arabinopyranosyl-(1-&gt;6)-alpha-D-glucopyranosyl) to release alpha-D-glucopyranosyl (Rd). It is not able to hydrolyze alpha-L-arabinofuranosyl-(1-&gt;6)-alpha-D-glucopyranosyl (Rc). In Bifidobacterium longum, this protein is Exo-alpha-(1-&gt;6)-L-arabinopyranosidase (apy).